Reading from the N-terminus, the 117-residue chain is Large ribosomal subunit protein eL34 (117 aa).

It belongs to the eukaryotic ribosomal protein eL34 family. As to quaternary structure, component of the large ribosomal subunit.

The protein resides in the cytoplasm. The protein localises to the cytosol. It localises to the endoplasmic reticulum. In terms of biological role, component of the large ribosomal subunit. The ribosome is a large ribonucleoprotein complex responsible for the synthesis of proteins in the cell. The protein is Large ribosomal subunit protein eL34 (rpl34) of Danio rerio (Zebrafish).